The primary structure comprises 24 residues: Humanin-like 10 (24 aa).

Belongs to the humanin family. In terms of tissue distribution, expressed in mature brain, thyroid gland and testis.

The protein localises to the secreted. Its subcellular location is the cytoplasm. Functionally, plays a role as a neuroprotective and antiapoptotic factor. This Homo sapiens (Human) protein is Humanin-like 10.